We begin with the raw amino-acid sequence, 258 residues long: Imidazole glycerol phosphate synthase subunit HisF (258 aa).

Active-site residues include D11 and D130.

The protein belongs to the HisA/HisF family. As to quaternary structure, heterodimer of HisH and HisF.

Its subcellular location is the cytoplasm. The catalysed reaction is 5-[(5-phospho-1-deoxy-D-ribulos-1-ylimino)methylamino]-1-(5-phospho-beta-D-ribosyl)imidazole-4-carboxamide + L-glutamine = D-erythro-1-(imidazol-4-yl)glycerol 3-phosphate + 5-amino-1-(5-phospho-beta-D-ribosyl)imidazole-4-carboxamide + L-glutamate + H(+). It participates in amino-acid biosynthesis; L-histidine biosynthesis; L-histidine from 5-phospho-alpha-D-ribose 1-diphosphate: step 5/9. Its function is as follows. IGPS catalyzes the conversion of PRFAR and glutamine to IGP, AICAR and glutamate. The HisF subunit catalyzes the cyclization activity that produces IGP and AICAR from PRFAR using the ammonia provided by the HisH subunit. This Escherichia coli O7:K1 (strain IAI39 / ExPEC) protein is Imidazole glycerol phosphate synthase subunit HisF.